A 257-amino-acid polypeptide reads, in one-letter code: Geranylgeranylglyceryl phosphate synthase (257 aa).

Mg(2+)-binding residues include aspartate 27 and threonine 57. Sn-glycerol 1-phosphate is bound by residues 175–181 (YLEAGSG), 207–208 (GG), and 229–230 (GN).

The protein belongs to the GGGP/HepGP synthase family. Group II subfamily. Mg(2+) serves as cofactor.

Its subcellular location is the cytoplasm. The catalysed reaction is sn-glycerol 1-phosphate + (2E,6E,10E)-geranylgeranyl diphosphate = sn-3-O-(geranylgeranyl)glycerol 1-phosphate + diphosphate. Its pathway is membrane lipid metabolism; glycerophospholipid metabolism. Functionally, prenyltransferase that catalyzes the transfer of the geranylgeranyl moiety of geranylgeranyl diphosphate (GGPP) to the C3 hydroxyl of sn-glycerol-1-phosphate (G1P). This reaction is the first ether-bond-formation step in the biosynthesis of archaeal membrane lipids. The polypeptide is Geranylgeranylglyceryl phosphate synthase (Sulfolobus acidocaldarius (strain ATCC 33909 / DSM 639 / JCM 8929 / NBRC 15157 / NCIMB 11770)).